Here is a 479-residue protein sequence, read N- to C-terminus: Anaerobic nitric oxide reductase flavorubredoxin (479 aa).

The segment at 30-210 (LRGSSYNSYL…PFSRLVTPKI (181 aa)) is zinc metallo-hydrolase. Residues H79, E81, D83, H147, D166, and H227 each coordinate Fe cation. The Flavodoxin-like domain maps to 254–393 (ITIFYDTMSN…LCREHGREIA (140 aa)). Residues 260–264 (TMSNN) and 342–369 (AFGS…EMSL) each bind FMN. One can recognise a Rubredoxin-like domain in the interval 423–474 (GPRMQCSVCQWIYDPAKGEPMQDVAPGTPWSEVPDNFLCPECSLGKDVFDEL). Fe cation is bound by residues C428, C431, C461, and C464.

This sequence in the N-terminal section; belongs to the zinc metallo-hydrolase group 3 family. Homotetramer. The cofactor is Fe cation. FMN is required as a cofactor.

The protein resides in the cytoplasm. It functions in the pathway nitrogen metabolism; nitric oxide reduction. Functionally, anaerobic nitric oxide reductase; uses NADH to detoxify nitric oxide (NO), protecting several 4Fe-4S NO-sensitive enzymes. Has at least 2 reductase partners, only one of which (NorW, flavorubredoxin reductase) has been identified. NO probably binds to the di-iron center; electrons enter from the NorW at rubredoxin and are transferred sequentially to the FMN center and the di-iron center. Also able to function as an aerobic oxygen reductase. The protein is Anaerobic nitric oxide reductase flavorubredoxin of Escherichia coli O6:H1 (strain CFT073 / ATCC 700928 / UPEC).